The chain runs to 131 residues: POU domain, class 3, transcription factor 3 (131 aa).

Residues 1–60 (FTQRRMKLGFTQADVGLALGTLYGNVFSQTTICRFEALQLSFKNMCKLKPLLNKWLEEAD) form the POU-specific domain. Residues 78 to 131 (KRKKRTSIEVSVKGALESHFLKCPKPSAQEITNLADSLQLEKEVVRVWFCNNLQ) constitute a DNA-binding region (homeobox).

Belongs to the POU transcription factor family. Class-3 subfamily. Homodimer. In terms of tissue distribution, brain.

Its subcellular location is the nucleus. In terms of biological role, transcription factor that acts synergistically with SOX11 and SOX4. Plays a role in neuronal development. Is implicated in an enhancer activity at the embryonic met-mesencephalic junction; the enhancer element contains the octamer motif (5'-ATTTGCAT-3'). This is POU domain, class 3, transcription factor 3 (POU3F3) from Sus scrofa (Pig).